The primary structure comprises 480 residues: Thyroid receptor-interacting protein 6 (480 aa).

Residues M1 to P12 are compositionally biased toward pro residues. A disordered region spans residues M1–R43. R25 carries the asymmetric dimethylarginine; alternate modification. Residue R25 is modified to Omega-N-methylarginine; alternate. A Phosphotyrosine; by SRC modification is found at Y55. The tract at residues P57–D84 is disordered. S92 is modified (phosphoserine). Positions L107–G134 are disordered. The segment covering D108 to A122 has biased composition (basic and acidic residues). 3 positions are modified to omega-N-methylarginine: R111, R183, and R190. Position 193 is a phosphoserine (S193). Residues R209 and R242 each carry the omega-N-methylarginine modification. The interval R218–E257 is disordered. Residues A238 to E247 are compositionally biased toward gly residues. LIM zinc-binding domains follow at residues G281–T339, E341–P401, and S404–E471. The tract at residues S473–C480 is interaction with MAGI1 and PTPN13.

Belongs to the zyxin/ajuba family. In terms of assembly, specifically interacts with the ligand binding domain of the thyroid receptor (TR) in the presence of thyroid hormone. Interacts (via the third LIM domain and C-terminus) with PTPN13 (via the second PDZ domain). Interacts (via the second LIM domain or via the third LIM domain plus C-terminus) with PDLIM4 (via PDZ domain). Found in a complex with PTPN13 and PDLIM4. Interacts with SVIL isoform 2. Interacts with LPAR2 but not other LPA receptors. Interacts with PRKAA2. Interacts with MAGI1. Interacts with SCRIB. In case of infection, interacts with S.typhimurium protein sseI. Post-translationally, phosphorylation at Tyr-55 by SRC is required for enhancement of lysophosphatidic acid-induced cell migration. Tyr-55 is dephosphorylated by PTPN13. In terms of tissue distribution, highly expressed in kidney, stomach, lung, heart and testis. Low expression levels in brain, colon, thymus, pancreas and skin. Not expressed in skeletal muscle.

The protein localises to the cytoplasm. The protein resides in the cytoskeleton. It is found in the cell junction. Its subcellular location is the focal adhesion. It localises to the nucleus. Functionally, relays signals from the cell surface to the nucleus to weaken adherens junction and promote actin cytoskeleton reorganization and cell invasiveness. Involved in lysophosphatidic acid-induced cell adhesion and migration. Acts as a transcriptional coactivator for NF-kappa-B and JUN, and mediates the transrepression of these transcription factors induced by glucocorticoid receptor. The protein is Thyroid receptor-interacting protein 6 (Trip6) of Mus musculus (Mouse).